The chain runs to 958 residues: Transcription factor PfmaH (958 aa).

The zn(2)-C6 fungal-type DNA-binding region spans 44–70; the sequence is CLNCSQAKTGCNKEVPCQRCQDKGLHC. A disordered region spans residues 272–301; that stretch reads EFAGSPSGVSPFGDLSTSNSEPSSSSWGSS. Residues 287 to 301 are compositionally biased toward low complexity; it reads STSNSEPSSSSWGSS.

Its subcellular location is the nucleus. Its function is as follows. Transcription factor; part of the gene cluster that mediates the biosynthesis of dihydroxynaphthalene (DHN)-melanin, a bluish-green pigment forming a dark layer in the conidial wall that protects the conidia from UV radiations. The 2 transcription factors present in the cluster, PfmaF and PfmaH, coordinately regulate DHN-melanin production. PfmaH acts as a pathway specific regulator to mediate the expression of Pfma cluster genes including PfmaJ, leading to DHN-melanin production in conidia, and regulates the conidial formation. This Pestalotiopsis fici (strain W106-1 / CGMCC3.15140) protein is Transcription factor PfmaH (PfmaH).